Reading from the N-terminus, the 264-residue chain is Glutamate racemase (264 aa).

Substrate-binding positions include 10–11 (DS) and 42–43 (YG). Cys-73 (proton donor/acceptor) is an active-site residue. 74-75 (NT) contributes to the substrate binding site. Residue Cys-181 is the Proton donor/acceptor of the active site. 182-183 (TH) is a substrate binding site.

The protein belongs to the aspartate/glutamate racemases family.

The catalysed reaction is L-glutamate = D-glutamate. It functions in the pathway cell wall biogenesis; peptidoglycan biosynthesis. Functionally, provides the (R)-glutamate required for cell wall biosynthesis. The chain is Glutamate racemase from Thermoanaerobacter sp. (strain X514).